A 646-amino-acid polypeptide reads, in one-letter code: DNA mismatch repair protein MutL (646 aa).

Disordered regions lie at residues 356–380 (FENR…NENS) and 415–452 (TKNS…AKPH). Residues 424–436 (SEATSNEAASAEI) are compositionally biased toward low complexity.

Belongs to the DNA mismatch repair MutL/HexB family.

Functionally, this protein is involved in the repair of mismatches in DNA. It is required for dam-dependent methyl-directed DNA mismatch repair. May act as a 'molecular matchmaker', a protein that promotes the formation of a stable complex between two or more DNA-binding proteins in an ATP-dependent manner without itself being part of a final effector complex. The polypeptide is DNA mismatch repair protein MutL (Staphylococcus carnosus (strain TM300)).